The sequence spans 100 residues: NAD(P)H-quinone oxidoreductase subunit 4L, chloroplastic (100 aa).

3 consecutive transmembrane segments (helical) span residues 1 to 21, 31 to 51, and 60 to 80; these read MLEH…YGLI, MCLE…SDFF, and IFSI…PAIL.

Belongs to the complex I subunit 4L family. NDH is composed of at least 16 different subunits, 5 of which are encoded in the nucleus.

Its subcellular location is the plastid. The protein localises to the chloroplast thylakoid membrane. The enzyme catalyses a plastoquinone + NADH + (n+1) H(+)(in) = a plastoquinol + NAD(+) + n H(+)(out). The catalysed reaction is a plastoquinone + NADPH + (n+1) H(+)(in) = a plastoquinol + NADP(+) + n H(+)(out). Functionally, NDH shuttles electrons from NAD(P)H:plastoquinone, via FMN and iron-sulfur (Fe-S) centers, to quinones in the photosynthetic chain and possibly in a chloroplast respiratory chain. The immediate electron acceptor for the enzyme in this species is believed to be plastoquinone. Couples the redox reaction to proton translocation, and thus conserves the redox energy in a proton gradient. The polypeptide is NAD(P)H-quinone oxidoreductase subunit 4L, chloroplastic (Cucumis sativus (Cucumber)).